We begin with the raw amino-acid sequence, 385 residues long: Beta-lactamase (385 aa).

An N-terminal signal peptide occupies residues 1–20 (MKRLLAFCLLFFAALGQAKV). S84 acts as the Acyl-ester intermediate in catalysis. Y170 serves as the catalytic Proton acceptor. Residue 335-337 (KTG) coordinates substrate.

The protein belongs to the class-C beta-lactamase family.

The protein localises to the periplasm. The enzyme catalyses a beta-lactam + H2O = a substituted beta-amino acid. This protein is a serine beta-lactamase with a substrate specificity for cephalosporins. This chain is Beta-lactamase, found in Lysobacter lactamgenus.